The chain runs to 1331 residues: DNA-directed RNA polymerase subunit beta' (1331 aa).

Zn(2+)-binding residues include C60, C62, C75, and C78. Residues D535, D537, and D539 each coordinate Mg(2+). The Zn(2+) site is built by C902, C979, C986, and C989.

Belongs to the RNA polymerase beta' chain family. In terms of assembly, the RNAP catalytic core consists of 2 alpha, 1 beta, 1 beta' and 1 omega subunit. When a sigma factor is associated with the core the holoenzyme is formed, which can initiate transcription. The cofactor is Mg(2+). Zn(2+) serves as cofactor.

The catalysed reaction is RNA(n) + a ribonucleoside 5'-triphosphate = RNA(n+1) + diphosphate. Functionally, DNA-dependent RNA polymerase catalyzes the transcription of DNA into RNA using the four ribonucleoside triphosphates as substrates. In Corynebacterium aurimucosum (strain ATCC 700975 / DSM 44827 / CIP 107346 / CN-1) (Corynebacterium nigricans), this protein is DNA-directed RNA polymerase subunit beta'.